The following is a 759-amino-acid chain: Multifunctional tryptophan biosynthesis protein (759 aa).

A Glutamine amidotransferase type-1 domain is found at 27–223 (PIVMIDNYDS…LNLTAGTWEE (197 aa)). 80–82 (GPG) lines the L-glutamine pocket. Cys108 (nucleophile; for GATase activity) is an active-site residue. L-glutamine contacts are provided by residues Gln112 and 158 to 159 (SL). Residues His197 and Glu199 each act as for GATase activity in the active site. The segment at 257 to 519 (ILEKIHAQRL…DPAAFARELL (263 aa)) is indole-3-glycerol phosphate synthase. The tract at residues 536–759 (LVKVCGTRSL…KAFINAVKEL (224 aa)) is N-(5'-phosphoribosyl)anthranilate isomerase.

The enzyme catalyses N-(5-phospho-beta-D-ribosyl)anthranilate = 1-(2-carboxyphenylamino)-1-deoxy-D-ribulose 5-phosphate. It catalyses the reaction 1-(2-carboxyphenylamino)-1-deoxy-D-ribulose 5-phosphate + H(+) = (1S,2R)-1-C-(indol-3-yl)glycerol 3-phosphate + CO2 + H2O. It carries out the reaction chorismate + L-glutamine = anthranilate + pyruvate + L-glutamate + H(+). It participates in amino-acid biosynthesis; L-tryptophan biosynthesis; L-tryptophan from chorismate: step 1/5. Its pathway is amino-acid biosynthesis; L-tryptophan biosynthesis; L-tryptophan from chorismate: step 3/5. It functions in the pathway amino-acid biosynthesis; L-tryptophan biosynthesis; L-tryptophan from chorismate: step 4/5. Functionally, trifunctional enzyme bearing the Gln amidotransferase (GATase) domain of anthranilate synthase, indole-glycerolphosphate synthase, and phosphoribosylanthranilate isomerase activities. The protein is Multifunctional tryptophan biosynthesis protein (trp1) of Schizosaccharomyces pombe (strain 972 / ATCC 24843) (Fission yeast).